The chain runs to 216 residues: 3-keto-L-gulonate-6-phosphate decarboxylase UlaD (216 aa).

Aspartate 11 provides a ligand contact to substrate. The Mg(2+) site is built by glutamate 33 and aspartate 62. Arginine 192 is a substrate binding site.

The protein belongs to the HPS/KGPDC family. KGPDC subfamily. In terms of assembly, homodimer. It depends on Mg(2+) as a cofactor.

The catalysed reaction is 3-dehydro-L-gulonate 6-phosphate + H(+) = L-xylulose 5-phosphate + CO2. It participates in cofactor degradation; L-ascorbate degradation; D-xylulose 5-phosphate from L-ascorbate: step 2/4. Catalyzes the decarboxylation of 3-keto-L-gulonate-6-P into L-xylulose-5-P. Is involved in the anaerobic L-ascorbate utilization. The protein is 3-keto-L-gulonate-6-phosphate decarboxylase UlaD of Salmonella typhi.